The chain runs to 284 residues: Pantothenate synthetase (284 aa).

Residue 30–37 (MGNLHQGH) participates in ATP binding. Histidine 37 acts as the Proton donor in catalysis. Glutamine 61 lines the (R)-pantoate pocket. A beta-alanine-binding site is contributed by glutamine 61. 149-152 (GQKD) contacts ATP. Glutamine 155 serves as a coordination point for (R)-pantoate. ATP is bound by residues valine 178 and 186–189 (LSSR).

The protein belongs to the pantothenate synthetase family. As to quaternary structure, homodimer.

It is found in the cytoplasm. The enzyme catalyses (R)-pantoate + beta-alanine + ATP = (R)-pantothenate + AMP + diphosphate + H(+). It participates in cofactor biosynthesis; (R)-pantothenate biosynthesis; (R)-pantothenate from (R)-pantoate and beta-alanine: step 1/1. Catalyzes the condensation of pantoate with beta-alanine in an ATP-dependent reaction via a pantoyl-adenylate intermediate. The protein is Pantothenate synthetase of Aeromonas salmonicida (strain A449).